We begin with the raw amino-acid sequence, 165 residues long: Thiol peroxidase (165 aa).

Positions 18 to 165 (PQVGDNLAEF…DYDAALAALN (148 aa)) constitute a Thioredoxin domain. C60 functions as the Cysteine sulfenic acid (-SOH) intermediate in the catalytic mechanism. C60 and C94 are disulfide-bonded.

This sequence belongs to the peroxiredoxin family. Tpx subfamily. Homodimer.

It carries out the reaction a hydroperoxide + [thioredoxin]-dithiol = an alcohol + [thioredoxin]-disulfide + H2O. In terms of biological role, thiol-specific peroxidase that catalyzes the reduction of hydrogen peroxide and organic hydroperoxides to water and alcohols, respectively. Plays a role in cell protection against oxidative stress by detoxifying peroxides. This is Thiol peroxidase from Corynebacterium glutamicum (strain ATCC 13032 / DSM 20300 / JCM 1318 / BCRC 11384 / CCUG 27702 / LMG 3730 / NBRC 12168 / NCIMB 10025 / NRRL B-2784 / 534).